The following is a 690-amino-acid chain: Protease 2 (690 aa).

Active-site charge relay system residues include S534, D619, and H654.

This sequence belongs to the peptidase S9A family.

It carries out the reaction Hydrolysis of -Arg-|-Xaa- and -Lys-|-Xaa- bonds in oligopeptides, even when P1' residue is proline.. Cleaves peptide bonds on the C-terminal side of lysyl and argininyl residues. The protein is Protease 2 (ptrB) of Moraxella lacunata.